Consider the following 196-residue polypeptide: UMP-CMP kinase (196 aa).

ATP is bound at residue 13 to 18 (GAGKGT). Residues 33–63 (SAGDLLRDERKKPDSQYGELIESYIRDGRIV) are NMP. A ribonucleoside 5'-phosphate contacts are provided by residues Arg-39, 61–63 (RIV), and 93–96 (GFPR). Residue Asn-100 coordinates CMP. Positions 133–143 (ERGKSSGRSDD) are LID. Arg-134 serves as a coordination point for ATP. Residues Arg-140 and Arg-151 each contribute to the a ribonucleoside 5'-phosphate site. ATP is bound at residue Lys-179.

This sequence belongs to the adenylate kinase family. UMP-CMP kinase subfamily. In terms of assembly, monomer. Requires Mg(2+) as cofactor.

It is found in the cytoplasm. Its subcellular location is the nucleus. The catalysed reaction is CMP + ATP = CDP + ADP. It carries out the reaction dCMP + ATP = dCDP + ADP. The enzyme catalyses UMP + ATP = UDP + ADP. It catalyses the reaction a 2'-deoxyribonucleoside 5'-diphosphate + ATP = a 2'-deoxyribonucleoside 5'-triphosphate + ADP. The catalysed reaction is a ribonucleoside 5'-diphosphate + ATP = a ribonucleoside 5'-triphosphate + ADP. In terms of biological role, catalyzes the phosphorylation of pyrimidine nucleoside monophosphates at the expense of ATP. Plays an important role in de novo pyrimidine nucleotide biosynthesis. Has preference for UMP and CMP as phosphate acceptors. Also displays broad nucleoside diphosphate kinase activity. The polypeptide is UMP-CMP kinase (cmpk1) (Xenopus tropicalis (Western clawed frog)).